We begin with the raw amino-acid sequence, 341 residues long: Limbic system-associated membrane protein (341 aa).

An N-terminal signal peptide occupies residues 1 to 28 (MVGRVQPDRKQLPLVLLRLLCLLPTGLP). 3 consecutive Ig-like domains span residues 29–122 (VRSV…PKTS), 132–214 (PKIS…VKVT), and 219–304 (PTIT…ASLV). Residues asparagine 40 and asparagine 66 are each glycosylated (N-linked (GlcNAc...) asparagine). The cysteines at positions 53 and 111 are disulfide-linked. At tyrosine 94 the chain carries Phosphotyrosine. 2 N-linked (GlcNAc...) asparagine glycosylation sites follow: asparagine 136 and asparagine 148. Intrachain disulfides connect cysteine 153/cysteine 197 and cysteine 239/cysteine 290. 3 N-linked (GlcNAc...) asparagine glycosylation sites follow: asparagine 279, asparagine 287, and asparagine 300.

This sequence belongs to the immunoglobulin superfamily. IgLON family.

It localises to the cell membrane. Its function is as follows. Mediates selective neuronal growth and axon targeting. Contributes to the guidance of developing axons and remodeling of mature circuits in the limbic system. Essential for normal growth of the hippocampal mossy fiber projection. The sequence is that of Limbic system-associated membrane protein (Lsamp) from Mus musculus (Mouse).